Here is a 694-residue protein sequence, read N- to C-terminus: Polyphosphate kinase (694 aa).

Position 45 (Asn-45) interacts with ATP. Positions 367 and 397 each coordinate Mg(2+). The active-site Phosphohistidine intermediate is the His-427. ATP is bound by residues Tyr-460, Arg-553, and His-580.

The protein belongs to the polyphosphate kinase 1 (PPK1) family. The cofactor is Mg(2+). In terms of processing, an intermediate of this reaction is the autophosphorylated ppk in which a phosphate is covalently linked to a histidine residue through a N-P bond.

The enzyme catalyses [phosphate](n) + ATP = [phosphate](n+1) + ADP. In terms of biological role, catalyzes the reversible transfer of the terminal phosphate of ATP to form a long-chain polyphosphate (polyP). The chain is Polyphosphate kinase from Campylobacter jejuni subsp. jejuni serotype O:6 (strain 81116 / NCTC 11828).